Here is a 640-residue protein sequence, read N- to C-terminus: MAAALPLQPSTTASATTTATAVALGEVEDEGLLASLFRDRFPEAQWREKPDVGRYLRELSGSGLDRLRREPERLAEERAQRLQQTRDLAFANYKTFIRGAECTERIHRLFGDVEASLGRLLDRLPRFQQSCRNFVKEAEEISSSRRMNTLTLNRHTEILEILEIPQLMDTCVRNSYHEEALELAAYVRRLERKYSSIPVIQGIVNEVRQSMQLMLSQLIQQLRTNIQLPACLRVIGYLRRMDVFTEAELRVKFLQARDAWLRSILTAIPNDDPYFHITKTIEACRVHLFDIITQYRAIFSDEDPLLPPAMGEYTVNEGAIFHGWVLQKISQFLQVLETDLYRGIGGRLDSLLGQCMYFGLSFSRVGADFRGQLAPVFQRVAISTFQKAVEEAVEKFQDEMTSYTLISTAAILGSSNTPATVPATQPGTLQPPMVLLDFPPLACFLNNILVAFNDLRLCCPVALAQDVTGTLENALTKVTKTILAFHRAEEAVFSSGEHEIFVQFCTAFLEDLVPYLNRCLQVLFPPAQIAQTLGISPTQLSKHGNLGHVNISAIQEPLAFILPKRETVFCLDEQELGPDLVAPAPELPAEQRSMEPVTEKREPGEPLPQEPMEGEPLPAEPPSEGGAIGSVPCPQPGEQP.

The disordered stretch occupies residues Leu580 to Pro640.

Belongs to the COG8 family. In terms of assembly, component of the conserved oligomeric Golgi complex which is composed of eight different subunits and is required for normal Golgi morphology and localization.

The protein resides in the golgi apparatus membrane. Its function is as follows. Required for normal Golgi function. The sequence is that of Conserved oligomeric Golgi complex subunit 8 (Cog8) from Mus musculus (Mouse).